Consider the following 430-residue polypeptide: GTPase Obg (430 aa).

An Obg domain is found at 1 to 158; it reads MFVDQVTISL…LDVTLELKLL (158 aa). The disordered stretch occupies residues 118–145; it reads RGGRGGRGNSRFATPRNPAPDFSENGEP. The region spanning 159-329 is the OBG-type G domain; sequence ADVGLVGFPS…LLYAIADKLD (171 aa). GTP contacts are provided by residues 165–172, 190–194, 212–215, 282–285, and 310–312; these read GFPSVGKS, FTTIK, DLPG, NKMD, and STI. The Mg(2+) site is built by S172 and T192. An OCT domain is found at 352 to 430; that stretch reads KHTPSQDKFT…ILGGEFEFVE (79 aa).

Belongs to the TRAFAC class OBG-HflX-like GTPase superfamily. OBG GTPase family. Monomer. Mg(2+) is required as a cofactor.

It localises to the cytoplasm. Its function is as follows. An essential GTPase which binds GTP, GDP and possibly (p)ppGpp with moderate affinity, with high nucleotide exchange rates and a fairly low GTP hydrolysis rate. Plays a role in control of the cell cycle, stress response, ribosome biogenesis and in those bacteria that undergo differentiation, in morphogenesis control. This chain is GTPase Obg, found in Staphylococcus haemolyticus (strain JCSC1435).